Here is a 77-residue protein sequence, read N- to C-terminus: Small ribosomal subunit protein bS21 (77 aa).

Residues 38–52 show a composition bias toward basic and acidic residues; that stretch reads KPSEKRAREKAEAIR. Residues 38–77 are disordered; it reads KPSEKRAREKAEAIRRTRKLARKRAQREGIVSNGRTASVR. The span at 53-62 shows a compositional bias: basic residues; that stretch reads RTRKLARKRA.

The protein belongs to the bacterial ribosomal protein bS21 family.

This chain is Small ribosomal subunit protein bS21, found in Bartonella bacilliformis (strain ATCC 35685 / KC583 / Herrer 020/F12,63).